The primary structure comprises 78 residues: Exodeoxyribonuclease 7 small subunit (78 aa).

The protein belongs to the XseB family. Heterooligomer composed of large and small subunits.

It localises to the cytoplasm. The enzyme catalyses Exonucleolytic cleavage in either 5'- to 3'- or 3'- to 5'-direction to yield nucleoside 5'-phosphates.. In terms of biological role, bidirectionally degrades single-stranded DNA into large acid-insoluble oligonucleotides, which are then degraded further into small acid-soluble oligonucleotides. The polypeptide is Exodeoxyribonuclease 7 small subunit (Actinobacillus succinogenes (strain ATCC 55618 / DSM 22257 / CCUG 43843 / 130Z)).